Here is a 294-residue protein sequence, read N- to C-terminus: Cytidine deaminase (294 aa).

2 consecutive CMP/dCMP-type deaminase domains span residues D48–K168 and L186–G294. N89–E91 contributes to the substrate binding site. Residue H102 participates in Zn(2+) binding. E104 acts as the Proton donor in catalysis. Zn(2+) is bound by residues C129 and C132.

It belongs to the cytidine and deoxycytidylate deaminase family. Homodimer. The cofactor is Zn(2+).

It catalyses the reaction cytidine + H2O + H(+) = uridine + NH4(+). The catalysed reaction is 2'-deoxycytidine + H2O + H(+) = 2'-deoxyuridine + NH4(+). This enzyme scavenges exogenous and endogenous cytidine and 2'-deoxycytidine for UMP synthesis. The polypeptide is Cytidine deaminase (Salmonella paratyphi A (strain ATCC 9150 / SARB42)).